The chain runs to 116 residues: uncharacterized protein (116 aa).

The segment at 77-116 is disordered; sequence SATSHYPKADDPQRFARSVSRGPSRVRRPARNSASRPVRR.

This is an uncharacterized protein from Frog virus 3 (isolate Goorha) (FV-3).